The primary structure comprises 287 residues: Serine/arginine-rich SC35-like splicing factor SCL33 (287 aa).

The interval 1–34 is disordered; it reads MRGRSYTPSPPRGYGRRGRSPSPRGRYGGRSRDL. Residues Ser-9 and Ser-20 each carry the phosphoserine modification. Residues 36–114 enclose the RRM domain; sequence TSLLVRNLRH…RELTVVFAEE (79 aa). Basic and acidic residues predominate over residues 116–132; it reads RKKPTEMRARERGGGRF. A disordered region spans residues 116–287; the sequence is RKKPTEMRAR…QYDEDRSPSQ (172 aa). Ser-165, Ser-175, Ser-177, Ser-188, and Ser-190 each carry phosphoserine. Positions 177–187 are enriched in basic and acidic residues; it reads SPREERYDGRR. The segment covering 220-237 has biased composition (basic residues); the sequence is SISRSPRRSRSPSPKRNR. 5 positions are modified to phosphoserine: Ser-238, Ser-248, Ser-271, Ser-284, and Ser-286. Over residues 244–260 the composition is skewed to basic residues; the sequence is SISRSPRRSRSPRRSRR. The span at 278–287 shows a compositional bias: basic and acidic residues; sequence QYDEDRSPSQ.

It belongs to the splicing factor SR family. SCL subfamily. In terms of assembly, component of the spliceosome. Homodimer. Interacts with AFC2, CYP59, RS2Z33, RNU1 and SR45. The interaction with AFC2 depends on phosphorylation status. Phosphorylated by AFC2. In terms of tissue distribution, ubiquitous. Mostly expressed in roots, fruits and flowers, and, to a lower extent, in leaves.

It is found in the nucleus speckle. It localises to the nucleus. The protein localises to the nucleoplasm. Its subcellular location is the cytoplasm. Functionally, involved in intron recognition and spliceosome assembly. Binds to multiple 5'-GAAG-3' repeats found in its third intron, suggesting autoregulation of alternative splicing. May be necessary for accurate splicing of the 3' region of introns. This Arabidopsis thaliana (Mouse-ear cress) protein is Serine/arginine-rich SC35-like splicing factor SCL33 (SCL33).